The following is a 476-amino-acid chain: Growth/differentiation factor 10 (476 aa).

An N-terminal signal peptide occupies residues 1 to 29 (MAPGPARISLGSQLLPMVPLLLLLRGAGC). A propeptide spanning residues 30 to 366 (GHRGPSWSSL…EKTMQKARRR (337 aa)) is cleaved from the precursor. A disordered region spans residues 39 to 63 (LPSAAAGLQGDRDSQQSPGDAAAAL). N114, N152, and N277 each carry an N-linked (GlcNAc...) asparagine glycan. The segment at 268–301 (GDFEPGAAPNSSADPRVRRAAQVSKPLQDNELPG) is disordered. 3 disulfide bridges follow: C374–C441, C403–C473, and C407–C475. The N-linked (GlcNAc...) asparagine glycan is linked to N467.

Belongs to the TGF-beta family. In terms of assembly, homodimer or heterodimer. Can form a non-covalent complex of the mature region and the pro-region. Highly expressed in epididymal adipose tissue, brain, bone and aorta and to a lesser extent in liver and spleen. Expressed at higher levels in preadipocytes than in mature adipocytes. Strongly expressed in glial cells of the cerebellum.

Its subcellular location is the secreted. Its function is as follows. Growth factor involved in osteogenesis and adipogenesis. Plays an inhibitory role in the process of osteoblast differentiation via SMAD2/3 pathway. Plays an inhibitory role in the process of adipogenesis. The protein is Growth/differentiation factor 10 of Mus musculus (Mouse).